The primary structure comprises 615 residues: Leucine aminopeptidase 2 (615 aa).

Residues 139–141 and 271–276 each bind a peptide; these read QCQ and PYGGME. Residue histidine 300 coordinates Zn(2+). The active-site Proton acceptor is glutamate 301. Zn(2+) contacts are provided by histidine 304 and glutamate 323. Tyrosine 386 functions as the Proton donor in the catalytic mechanism.

The protein belongs to the peptidase M1 family. Zn(2+) serves as cofactor.

It is found in the cytoplasm. It localises to the nucleus. The enzyme catalyses an epoxide + H2O = an ethanediol. Functionally, aminopeptidase that preferentially cleaves di- and tripeptides. Also has low epoxide hydrolase activity (in vitro). Can hydrolyze the epoxide leukotriene LTA(4) but it forms preferentially 5,6-dihydroxy-7,9,11,14-eicosatetraenoic acid rather than the cytokine leukotriene B(4) as the product compared to the homologous mammalian enzyme (in vitro). This Aspergillus oryzae (strain ATCC 42149 / RIB 40) (Yellow koji mold) protein is Leucine aminopeptidase 2.